A 62-amino-acid polypeptide reads, in one-letter code: UPF0434 protein R03186 (62 aa).

It belongs to the UPF0434 family.

This is UPF0434 protein R03186 from Rhizobium meliloti (strain 1021) (Ensifer meliloti).